Here is a 2079-residue protein sequence, read N- to C-terminus: von Willebrand factor A domain-containing protein DDB_G0286969 (2079 aa).

Positions 11 to 147 constitute a VIT domain; that stretch reads EQILPSFISI…ELEIIITYST (137 aa). A disordered region spans residues 178 to 203; the sequence is NENSTTNTNTQTQPQSVNTTTTTTPS. Low complexity predominate over residues 180-203; the sequence is NSTTNTNTQTQPQSVNTTTTTTPS. One can recognise a VWFA domain in the interval 354–525; the sequence is ELIFLVDVSE…KVMRQLKRAL (172 aa). Disordered regions lie at residues 761 to 800, 832 to 866, 956 to 1139, 1155 to 1203, and 1239 to 1294; these read PTTLSGSGIPFYNPSSPNHDRNINTTQQPTPTQSTPLKTP, PFVPSPNKLPTTTTSAPATTPITTPAPTTTTTEVK, AKPV…TKPT, NEPA…VSST, and DSNT…ADAE. Composition is skewed to low complexity over residues 785-800, 841-866, and 956-973; these read TTQQPTPTQSTPLKTP, PTTTTSAPATTPITTPAPTTTTTEVK, and AKPVEPAVVQQQQPQQTK. A coiled-coil region spans residues 923–957; that stretch reads EMIKIAEAKAAAEQKAAAEQKAIADAKAAAEQAAK. The segment covering 974-989 has biased composition (basic and acidic residues); the sequence is PKADKQSKQNAKDNKQ. Residues 992–1006 are compositionally biased toward low complexity; the sequence is KPVVVEQKPPVVTET. A compositionally biased stretch (polar residues) spans 1007–1021; it reads KPTVATESATPTKPT. Over residues 1023-1061 the composition is skewed to low complexity; it reads AQAAAAAAAAAQQAAQQAAATTPVKQQPTKQTTPNKSTP. Over residues 1092–1111 the composition is skewed to basic and acidic residues; sequence KPVETKPVEQTKPVETKPVE. The segment covering 1176–1198 has biased composition (low complexity); the sequence is NNNNNNNNNNNNNNNNNNNNNNN. Residues 1239–1272 are compositionally biased toward polar residues; sequence DSNTKAPDSLKTTPIFSNGPQGISPSSGNGSNKS. Basic and acidic residues predominate over residues 1280-1292; that stretch reads DRGGRGGRDRNAD. The MIF4G domain occupies 1317 to 1527; it reads LKKFKFNLNR…LDLIDLRANK (211 aa). The disordered stretch occupies residues 1530–1755; that stretch reads PKNSTQTKTK…PAPVEPVKPK (226 aa). Basic and acidic residues-rich tracts occupy residues 1538–1550, 1557–1599, and 1621–1634; these read TKKDESDKEERFI, QKRE…RDAP, and NNRDKGGRGGDRSG. 2 stretches are compositionally biased toward low complexity: residues 1635 to 1659 and 1688 to 1699; these read GKQSPSGKKDSGFGPSSGGSSLFGS and SSSIPSIPNRSN. Residues 1725 to 1740 are compositionally biased toward basic and acidic residues; that stretch reads SNDRDSRGPSKPDNRK. Positions 1760–1882 constitute an MI domain; the sequence is KIEDDISMTL…PLNYLEEAYA (123 aa).

The chain is von Willebrand factor A domain-containing protein DDB_G0286969 from Dictyostelium discoideum (Social amoeba).